Reading from the N-terminus, the 511-residue chain is Rab proteins geranylgeranyltransferase component A (511 aa).

This sequence belongs to the Rab GDI family.

The protein localises to the cytoplasm. It is found in the perinuclear region. The protein resides in the cytoskeleton. Its subcellular location is the spindle pole. Functionally, binds unprenylated Rab proteins, presents it to the catalytic component B, and remains bound to it after the geranylgeranyl transfer reaction. The component A is thought to be regenerated by transferring its prenylated Rab to a protein acceptor. This chain is Rab proteins geranylgeranyltransferase component A, found in Drosophila melanogaster (Fruit fly).